The sequence spans 1166 residues: Reverse gyrase 2 (1166 aa).

The segment at 1-40 adopts an RG N-terminal-type zinc-finger fold; the sequence is MINVMYKNSCPNCGGDISGDRLLNGLPCEACLPYINGIDD. The Zn(2+) site is built by cysteine 10, cysteine 13, cysteine 28, and cysteine 31. ATP-binding positions include glutamine 92 and 109-116; that span reads APTGLGKT. Residues 96 to 285 enclose the Helicase ATP-binding domain; sequence LRRLASNQSF…ALRLLTGFEP (190 aa). Residues 190 to 193 carry the DEAD box motif; that stretch reads DDAD. A topoisomerase I region spans residues 576 to 1166; sequence FNISTGLLIV…VNPLKSEQNV (591 aa). Residues 580–743 enclose the Toprim domain; it reads TGLLIVESPT…NVYRVVYHEI (164 aa). Position 586 (glutamate 586) interacts with Mg(2+). The RG C-terminal-type zinc finger occupies 662 to 689; the sequence is IKKCLDCNKIFSSASDKCPYCGSANLQS. 4 residues coordinate Zn(2+): cysteine 665, cysteine 668, cysteine 679, and cysteine 682. Residue aspartate 712 participates in Mg(2+) binding. The Topo IA-type catalytic domain maps to 759-1157; the sequence is NTNLVMSQIV…EIFSEISTLV (399 aa). Catalysis depends on tyrosine 903, which acts as the O-(5'-phospho-DNA)-tyrosine intermediate.

It in the N-terminal section; belongs to the DEAD box helicase family. DDVD subfamily. This sequence in the C-terminal section; belongs to the type IA topoisomerase family. Monomer. Zn(2+) serves as cofactor. Requires Mg(2+) as cofactor.

The protein resides in the cytoplasm. It carries out the reaction ATP + H2O = ADP + phosphate + H(+). At least one of the 2 proteins is inhibited by actinomycin D. Less sensitive to NaCl than TopR1, maximal positive supercoiling is observed with 100 mM NaCl; as NaCl rises higher than 400 mM supercoiling decreases. At 600 mM NaCl relaxes but does not introduce positive supercoils into negatively supercoiled substrate. Modifies the topological state of DNA by introducing positive supercoils in an ATP-dependent process. A highly processive enzyme, it introduces a large number of positive supercoils directly in a negatively supercoiled substrate. At 75 degrees Celsius introduces more than 23 positive supercoils into pTZ18R DNA (probably 2860 bp), more than TopR1; unlike TopR1 little to no relaxation of the negatively supercoiled substrate is seen in the presence of ATP, in the absence of ATP no activity is seen. At 45 degrees Celsius the enzyme is slower and in vitro individual steps can be detected. It cleaves transiently a single DNA strand and remains covalently bound to the 5' DNA end through a tyrosine residue. May be involved in DNA damage response. May be involved in rewinding the DNA strands in the regions of the chromosome that have opened up to allow transcription or replication. Functionally, there are 2 genes for this protein in the cell. During exponential growth this is the more highly expressed isoform (about 125 molecules per cell at 80 degrees Celsius, about 117 molecules at 88 degrees Celsius); this isoform is less active at higher temperature. Grows actively at both 80 and 88 degrees Celsius; survives a long exposure at 45 degrees Celsius without DNA replication or cell division occurring. Experiments using whole cell extracts do not distinguish which isoform is present, the results are probably a mixture of the two forms. The protein is Reverse gyrase 2 of Saccharolobus solfataricus (strain ATCC 35092 / DSM 1617 / JCM 11322 / P2) (Sulfolobus solfataricus).